The following is an 851-amino-acid chain: DNA mismatch repair protein MutS (851 aa).

An ATP-binding site is contributed by 602–609; sequence GPNMSGKS.

It belongs to the DNA mismatch repair MutS family.

Its function is as follows. This protein is involved in the repair of mismatches in DNA. It is possible that it carries out the mismatch recognition step. This protein has a weak ATPase activity. This Streptococcus equi subsp. equi (strain 4047) protein is DNA mismatch repair protein MutS.